The primary structure comprises 184 residues: dTTP/UTP pyrophosphatase (184 aa).

The active-site Proton acceptor is D65.

The protein belongs to the Maf family. YhdE subfamily. The cofactor is a divalent metal cation.

It localises to the cytoplasm. The catalysed reaction is dTTP + H2O = dTMP + diphosphate + H(+). The enzyme catalyses UTP + H2O = UMP + diphosphate + H(+). Functionally, nucleoside triphosphate pyrophosphatase that hydrolyzes dTTP and UTP. May have a dual role in cell division arrest and in preventing the incorporation of modified nucleotides into cellular nucleic acids. This is dTTP/UTP pyrophosphatase from Thermococcus onnurineus (strain NA1).